The chain runs to 427 residues: Protein king tubby 1 (427 aa).

A disordered region spans residues 48-174 (SPSNPDQIIS…ASGHNDAEGD (127 aa)). Residues 57–86 (SSSGSPTTVTATGTGTTTTTGSVTTTPTSP) show a composition bias toward low complexity.

This sequence belongs to the TUB family.

The protein localises to the cytoplasm. It localises to the nucleus. The sequence is that of Protein king tubby 1 (king-tubby1) from Culex quinquefasciatus (Southern house mosquito).